A 347-amino-acid polypeptide reads, in one-letter code: GMP reductase (347 aa).

Residue 108–131 participates in NADP(+) binding; that stretch reads ADFDKMKQILALSPALKFICIDVA. The K(+) site is built by Gly-181 and Gly-183. Residue Cys-186 is the Thioimidate intermediate of the active site. 216 to 239 is a binding site for NADP(+); that stretch reads IVSDGGCSVPGDVAKAFGGGADFV.

It belongs to the IMPDH/GMPR family. GuaC type 1 subfamily. Homotetramer.

The enzyme catalyses IMP + NH4(+) + NADP(+) = GMP + NADPH + 2 H(+). In terms of biological role, catalyzes the irreversible NADPH-dependent deamination of GMP to IMP. It functions in the conversion of nucleobase, nucleoside and nucleotide derivatives of G to A nucleotides, and in maintaining the intracellular balance of A and G nucleotides. This is GMP reductase from Yersinia enterocolitica serotype O:8 / biotype 1B (strain NCTC 13174 / 8081).